We begin with the raw amino-acid sequence, 436 residues long: Elongation factor 1-alpha (436 aa).

Residues 8-232 (KPHLNMIVTG…DDFKMAEKPV (225 aa)) form the tr-type G domain. Positions 17–24 (GHIDNGKS) are G1. 17–24 (GHIDNGKS) serves as a coordination point for GTP. Ser24 provides a ligand contact to Mg(2+). The G2 stretch occupies residues 74–78 (GITID). The G3 stretch occupies residues 95-98 (DAPG). GTP is bound by residues 95-99 (DAPGH) and 157-160 (NKMD). The tract at residues 157 to 160 (NKMD) is G4. The tract at residues 196-198 (SGW) is G5.

It belongs to the TRAFAC class translation factor GTPase superfamily. Classic translation factor GTPase family. EF-Tu/EF-1A subfamily.

The protein localises to the cytoplasm. It catalyses the reaction GTP + H2O = GDP + phosphate + H(+). GTP hydrolase that promotes the GTP-dependent binding of aminoacyl-tRNA to the A-site of ribosomes during protein biosynthesis. The polypeptide is Elongation factor 1-alpha (Cenarchaeum symbiosum (strain A)).